The following is a 355-amino-acid chain: Peptide chain release factor 1 (355 aa).

Position 233 is an N5-methylglutamine (glutamine 233).

The protein belongs to the prokaryotic/mitochondrial release factor family. Methylated by PrmC. Methylation increases the termination efficiency of RF1.

It localises to the cytoplasm. Peptide chain release factor 1 directs the termination of translation in response to the peptide chain termination codons UAG and UAA. The chain is Peptide chain release factor 1 from Bacillus mycoides (strain KBAB4) (Bacillus weihenstephanensis).